Here is a 479-residue protein sequence, read N- to C-terminus: Ubiquinone biosynthesis monooxygenase COQ6, mitochondrial (479 aa).

The N-terminal 17 residues, 1-17, are a transit peptide targeting the mitochondrion; it reads MFFSKVMLTRRILVRGL.

The protein belongs to the UbiH/COQ6 family. As to quaternary structure, component of a multi-subunit COQ enzyme complex, composed of at least COQ3, COQ4, COQ5, COQ6, COQ7 and COQ9. The cofactor is FAD.

The protein localises to the mitochondrion inner membrane. It catalyses the reaction 4-hydroxy-3-(all-trans-hexaprenyl)benzoate + 2 reduced [2Fe-2S]-[ferredoxin] + O2 + 2 H(+) = 3,4-dihydroxy-5-(all-trans-hexaprenyl)benzoate + 2 oxidized [2Fe-2S]-[ferredoxin] + H2O. It carries out the reaction 2-methoxy-6-(all-trans-hexaprenyl)phenol + 2 reduced [2Fe-2S]-[ferredoxin] + O2 + 2 H(+) = 2-methoxy-6-(all-trans-hexaprenyl)benzene-1,4-diol + 2 oxidized [2Fe-2S]-[ferredoxin] + H2O. The enzyme catalyses 4-amino-3-(all-trans-hexaprenyl)benzoate + 2 reduced [2Fe-2S]-[ferredoxin] + O2 + 2 H(+) = 4-amino-5-hydroxy-3-(all-trans-hexaprenyl)benzoate + 2 oxidized [2Fe-2S]-[ferredoxin] + H2O. The catalysed reaction is 4-amino-5-hydroxy-3-(all-trans-hexaprenyl)benzoate + 4 reduced [2Fe-2S]-[ferredoxin] + O2 + 5 H(+) = 3,4-dihydroxy-5-(all-trans-hexaprenyl)benzoate + 4 oxidized [2Fe-2S]-[ferredoxin] + NH4(+) + H2O. It functions in the pathway cofactor biosynthesis; ubiquinone biosynthesis. FAD-dependent monooxygenase required for two non-consecutive steps during ubiquinone biosynthesis. Required for the C5-ring hydroxylation during ubiquinone biosynthesis by catalyzing the hydroxylation of 4-hydroxy-3-(all-trans-hexaprenyl)benzoic acid to 3,4-dihydroxy-5-(all-trans-hexaprenyl)benzoic acid. Also acts downstream of COQ4, for the C1-hydroxylation during ubiquinone biosynthesis by catalyzing the hydroxylation of 2-methoxy-6-(all-trans-hexaprenyl)phenol to 2-methoxy-6-(all-trans-hexaprenyl)benzene-1,4-diol. The electrons required for the hydroxylation reaction are funneled indirectly from NADPH via ferredoxin (YAH1) and ferredoxin reductase (ARH1) to COQ6. Can also convert 3-hexaprenyl-4-aminobenzoic acid (HAB), a COQ2-prenylated pABA, to DHHB in a two step process. HAB is first hydroxylated at C5 to yield 3-hexaprenyl-4-amino-5-hydroxybenzoic acid (HHAB) which is further deaminated at C4 by COQ6 to produce DHHB. In Saccharomyces cerevisiae (strain ATCC 204508 / S288c) (Baker's yeast), this protein is Ubiquinone biosynthesis monooxygenase COQ6, mitochondrial.